Here is a 65-residue protein sequence, read N- to C-terminus: Large ribosomal subunit protein bL35 (65 aa).

The span at 1–15 (MPKMKTKKSASKRFQ) shows a compositional bias: basic residues. Positions 1–27 (MPKMKTKKSASKRFQVRGSGSIKRGQA) are disordered.

The protein belongs to the bacterial ribosomal protein bL35 family.

The sequence is that of Large ribosomal subunit protein bL35 from Bordetella petrii (strain ATCC BAA-461 / DSM 12804 / CCUG 43448).